Here is a 139-residue protein sequence, read N- to C-terminus: Ribonuclease VapC36 (139 aa).

In terms of domain architecture, PINc spans 1-127 (MIVDTSAVVA…GNDFPQTDLE (127 aa)). Residues aspartate 4 and aspartate 100 each contribute to the Mg(2+) site.

It belongs to the PINc/VapC protein family. Mg(2+) serves as cofactor.

In terms of biological role, toxic component of a type II toxin-antitoxin (TA) system. An RNase. Its cognate antitoxin is VapB36. This chain is Ribonuclease VapC36, found in Mycobacterium tuberculosis (strain ATCC 25618 / H37Rv).